We begin with the raw amino-acid sequence, 104 residues long: Large ribosomal subunit protein bL21 (104 aa).

It belongs to the bacterial ribosomal protein bL21 family. In terms of assembly, part of the 50S ribosomal subunit. Contacts protein L20.

This protein binds to 23S rRNA in the presence of protein L20. The sequence is that of Large ribosomal subunit protein bL21 from Clostridium tetani (strain Massachusetts / E88).